The following is a 299-amino-acid chain: Diphthine methyl ester synthase 1 (299 aa).

Residues Leu-9, Asp-85, Gly-88, Ser-113–Val-114, Leu-164, Leu-222, and His-247 each bind S-adenosyl-L-methionine.

This sequence belongs to the diphthine synthase family.

Its subcellular location is the cytoplasm. It carries out the reaction 2-[(3S)-amino-3-carboxypropyl]-L-histidyl-[translation elongation factor 2] + 4 S-adenosyl-L-methionine = diphthine methyl ester-[translation elongation factor 2] + 4 S-adenosyl-L-homocysteine + 3 H(+). The protein operates within protein modification; peptidyl-diphthamide biosynthesis. Its function is as follows. S-adenosyl-L-methionine-dependent methyltransferase that catalyzes four methylations of the modified target histidine residue in translation elongation factor 2 (EF-2), to form an intermediate called diphthine methyl ester. The four successive methylation reactions represent the second step of diphthamide biosynthesis. This chain is Diphthine methyl ester synthase 1 (DPH5), found in Candida albicans (strain SC5314 / ATCC MYA-2876) (Yeast).